Consider the following 274-residue polypeptide: uncharacterized protein (274 aa).

The disordered stretch occupies residues 253 to 274 (QTGDVRTTEGTALTDDTTKRNI).

This is an uncharacterized protein from Deinococcus radiodurans (strain ATCC 13939 / DSM 20539 / JCM 16871 / CCUG 27074 / LMG 4051 / NBRC 15346 / NCIMB 9279 / VKM B-1422 / R1).